A 284-amino-acid chain; its full sequence is Polyamine aminopropyltransferase (284 aa).

The PABS domain maps to 2-237; sequence ELWYTEQHTE…GHWLFGFASK (236 aa). Glutamine 31 lines the S-methyl-5'-thioadenosine pocket. Residues histidine 62 and aspartate 86 each coordinate spermidine. Residues glutamate 106 and 137 to 138 each bind S-methyl-5'-thioadenosine; that span reads DG. The active-site Proton acceptor is the aspartate 155. 155-158 contacts spermidine; that stretch reads DSTD. Proline 162 contributes to the S-methyl-5'-thioadenosine binding site.

It belongs to the spermidine/spermine synthase family. As to quaternary structure, homodimer or homotetramer.

The protein localises to the cytoplasm. It catalyses the reaction S-adenosyl 3-(methylsulfanyl)propylamine + putrescine = S-methyl-5'-thioadenosine + spermidine + H(+). Its pathway is amine and polyamine biosynthesis; spermidine biosynthesis; spermidine from putrescine: step 1/1. Functionally, catalyzes the irreversible transfer of a propylamine group from the amino donor S-adenosylmethioninamine (decarboxy-AdoMet) to putrescine (1,4-diaminobutane) to yield spermidine. In Alkaliphilus oremlandii (strain OhILAs) (Clostridium oremlandii (strain OhILAs)), this protein is Polyamine aminopropyltransferase.